The primary structure comprises 101 residues: Putative fatty acid-binding protein 5-like protein 3 (101 aa).

It belongs to the calycin superfamily. Fatty-acid binding protein (FABP) family.

In terms of biological role, high specificity for fatty acids. The polypeptide is Putative fatty acid-binding protein 5-like protein 3 (FABP5P3) (Homo sapiens (Human)).